A 77-amino-acid polypeptide reads, in one-letter code: Protein AC43 (77 aa).

Plays a role in the production of occlusion bodies as well as expression of the polyhedrin gene. The sequence is that of Protein AC43 from Autographa californica nuclear polyhedrosis virus (AcMNPV).